Reading from the N-terminus, the 341-residue chain is Phosphoribosylformylglycinamidine cyclo-ligase (341 aa).

This sequence belongs to the AIR synthase family.

The protein resides in the cytoplasm. It catalyses the reaction 2-formamido-N(1)-(5-O-phospho-beta-D-ribosyl)acetamidine + ATP = 5-amino-1-(5-phospho-beta-D-ribosyl)imidazole + ADP + phosphate + H(+). The protein operates within purine metabolism; IMP biosynthesis via de novo pathway; 5-amino-1-(5-phospho-D-ribosyl)imidazole from N(2)-formyl-N(1)-(5-phospho-D-ribosyl)glycinamide: step 2/2. The protein is Phosphoribosylformylglycinamidine cyclo-ligase of Synechocystis sp. (strain ATCC 27184 / PCC 6803 / Kazusa).